Consider the following 61-residue polypeptide: Photosystem II reaction center protein K (61 aa).

Residues 1–24 constitute a propeptide that is removed on maturation; it reads MLNIFSLICICLNSALYSSSLFFA. A helical membrane pass occupies residues 40-60; sequence MPVIPLFFFLLAFVWQAAVSF.

It belongs to the PsbK family. PSII is composed of 1 copy each of membrane proteins PsbA, PsbB, PsbC, PsbD, PsbE, PsbF, PsbH, PsbI, PsbJ, PsbK, PsbL, PsbM, PsbT, PsbX, PsbY, PsbZ, Psb30/Ycf12, at least 3 peripheral proteins of the oxygen-evolving complex and a large number of cofactors. It forms dimeric complexes.

Its subcellular location is the plastid. It localises to the chloroplast thylakoid membrane. Its function is as follows. One of the components of the core complex of photosystem II (PSII). PSII is a light-driven water:plastoquinone oxidoreductase that uses light energy to abstract electrons from H(2)O, generating O(2) and a proton gradient subsequently used for ATP formation. It consists of a core antenna complex that captures photons, and an electron transfer chain that converts photonic excitation into a charge separation. The protein is Photosystem II reaction center protein K of Panax ginseng (Korean ginseng).